The chain runs to 79 residues: Small ribosomal subunit protein uS17 (79 aa).

The protein belongs to the universal ribosomal protein uS17 family. In terms of assembly, part of the 30S ribosomal subunit.

Functionally, one of the primary rRNA binding proteins, it binds specifically to the 5'-end of 16S ribosomal RNA. This chain is Small ribosomal subunit protein uS17, found in Rhizobium leguminosarum bv. trifolii (strain WSM2304).